The chain runs to 395 residues: Elongation factor Tu (395 aa).

The region spanning 6-205 (KPHINVGTIG…NALEKIDLPI (200 aa)) is the tr-type G domain. The G1 stretch occupies residues 15-22 (GHVDHGKT). 15–22 (GHVDHGKT) provides a ligand contact to GTP. T22 is a Mg(2+) binding site. Residues 59-63 (GITIS) are G2. Positions 80-83 (DCPG) are G3. GTP is bound by residues 80–84 (DCPGH) and 135–138 (NKCD). A G4 region spans residues 135 to 138 (NKCD). The tract at residues 173 to 175 (SAV) is G5.

It belongs to the TRAFAC class translation factor GTPase superfamily. Classic translation factor GTPase family. EF-Tu/EF-1A subfamily. In terms of assembly, monomer.

It localises to the cytoplasm. The enzyme catalyses GTP + H2O = GDP + phosphate + H(+). Functionally, GTP hydrolase that promotes the GTP-dependent binding of aminoacyl-tRNA to the A-site of ribosomes during protein biosynthesis. This chain is Elongation factor Tu, found in Ehrlichia ruminantium (strain Gardel).